Reading from the N-terminus, the 150-residue chain is U1 small nuclear ribonucleoprotein C (150 aa).

The Matrin-type zinc-finger motif lies at 4–36; it reads YYCDYCKSYLTHDTMSVRKSHLQGRNHIKFYCD. A disordered region spans residues 66–132; the sequence is SDAKKSNGSS…GLPLPPPAVY (67 aa). The segment covering 80–92 has biased composition (basic and acidic residues); that stretch reads DIDKKENSSDHNK. Positions 103 to 112 are enriched in acidic residues; it reads NDNDDDDDEM. A compositionally biased stretch (pro residues) spans 115-130; the sequence is LPPPPNLSGLPLPPPA.

The protein belongs to the U1 small nuclear ribonucleoprotein C family. As to quaternary structure, U1 snRNP is composed of the 7 core Sm proteins B/B', D1, D2, D3, E, F and G that assemble in a heptameric protein ring on the Sm site of the small nuclear RNA to form the core snRNP, and at least 3 U1 snRNP-specific proteins U1-70K, U1-A and U1-C. U1-C interacts with U1 snRNA and the 5' splice-site region of the pre-mRNA.

It localises to the nucleus. In terms of biological role, component of the spliceosomal U1 snRNP, which is essential for recognition of the pre-mRNA 5' splice-site and the subsequent assembly of the spliceosome. U1-C is directly involved in initial 5' splice-site recognition for both constitutive and regulated alternative splicing. The interaction with the 5' splice-site seems to precede base-pairing between the pre-mRNA and the U1 snRNA. Stimulates commitment or early (E) complex formation by stabilizing the base pairing of the 5' end of the U1 snRNA and the 5' splice-site region. This chain is U1 small nuclear ribonucleoprotein C, found in Candida albicans (strain SC5314 / ATCC MYA-2876) (Yeast).